A 133-amino-acid chain; its full sequence is Holo-[acyl-carrier-protein] synthase (133 aa).

Mg(2+)-binding residues include Asp8 and Glu57.

Belongs to the P-Pant transferase superfamily. AcpS family. Mg(2+) serves as cofactor.

It localises to the cytoplasm. It catalyses the reaction apo-[ACP] + CoA = holo-[ACP] + adenosine 3',5'-bisphosphate + H(+). Its function is as follows. Transfers the 4'-phosphopantetheine moiety from coenzyme A to a Ser of acyl-carrier-protein. The protein is Holo-[acyl-carrier-protein] synthase of Caulobacter sp. (strain K31).